The chain runs to 622 residues: Polyamine transporter 3 (622 aa).

Over residues 1 to 47 the composition is skewed to polar residues; that stretch reads MNRQESINSFNSDETSSLSDVESQQPQQYIPSESGSKSNMAPNQLKL. The segment at 1 to 76 is disordered; it reads MNRQESINSF…VPDVNAPQSS (76 aa). Topologically, residues 1 to 182 are cytoplasmic; that stretch reads MNRQESINSF…WPAWIRWSYT (182 aa). Ser-55 carries the post-translational modification Phosphoserine. The residue at position 98 (Thr-98) is a Phosphothreonine. Ser-101 and Ser-132 each carry phosphoserine. The interval 105–152 is disordered; the sequence is TSTAISRTRTRQIDGASSPSSNEDALESDNNEKGKEGDSSGANDEAPD. The helical transmembrane segment at 183-203 threads the bilayer; that stretch reads VLLSILVICVAYGSACISGGL. Topologically, residues 204–215 are extracellular; that stretch reads GTVEKKYHVGME. The helical transmembrane segment at 216 to 236 threads the bilayer; sequence AAILSVSLMVIGFSLGPLIWS. Residues 237-245 are Cytoplasmic-facing; that stretch reads PVSDLYGRR. Residues 246 to 266 traverse the membrane as a helical segment; that stretch reads VAYFVSMGLYVIFNIPCALAP. The Extracellular segment spans residues 267–275; the sequence is NLGSLLACR. The chain crosses the membrane as a helical span at residues 276 to 296; that stretch reads FLCGVWSSSGLCLVGGSIADM. Over 297–305 the chain is Cytoplasmic; that stretch reads FPSETRGKA. The chain crosses the membrane as a helical span at residues 306-326; sequence IAFFAFAPYVGPVVGPLVNGF. Topologically, residues 327–335 are extracellular; it reads ISVSTGRMD. Residues 336–356 traverse the membrane as a helical segment; sequence LIFWVNMAFAGVMWIISSAIP. The Cytoplasmic portion of the chain corresponds to 357-416; it reads ETYAPVILKRKAARLRKETGNPKIMTEQEAQGVSMGEMMRACLLRPLYFSVTEPVLVATC. A helical membrane pass occupies residues 417–437; that stretch reads FYVCLIYSLLYAFFFAFPVIF. At 438-446 the chain is on the extracellular side; sequence GELYGYKDN. The chain crosses the membrane as a helical span at residues 447 to 467; sequence LVGLMFIPIVIGALWALATTF. Topologically, residues 468-487 are cytoplasmic; it reads YCENKYLQIVKQRKPTPEDR. The helical transmembrane segment at 488-508 threads the bilayer; the sequence is LLGAKIGAPFAAIALWILGAT. Residues 509–512 are Extracellular-facing; the sequence is AYKH. A helical transmembrane segment spans residues 513–533; sequence IIWVGPASAGLAFGFGMVLIY. The Cytoplasmic segment spans residues 534-550; that stretch reads YSLNNYIIDCYVQYASS. A helical transmembrane segment spans residues 551 to 571; that stretch reads ALATKVFLRSAGGAAFPLFTI. The Extracellular segment spans residues 572-583; the sequence is QMYHKLNLHWGS. A helical transmembrane segment spans residues 584–604; it reads WLLAFISTAMIALPFAFSYWG. The Cytoplasmic portion of the chain corresponds to 605-622; that stretch reads KGLRHKLSKKDYSIDSIE.

This sequence belongs to the major facilitator superfamily. DHA1 family. Polyamines/proton antiporter (TC 2.A.1.2.16) subfamily.

The protein resides in the cell membrane. In terms of biological role, cell membrane polyamine/proton antiporter, involved in the detoxification of excess polyamines in the cytoplasm. Recognizes spermine, but not spermidine. The chain is Polyamine transporter 3 (TPO3) from Saccharomyces cerevisiae (strain ATCC 204508 / S288c) (Baker's yeast).